A 450-amino-acid chain; its full sequence is 23S rRNA (uracil(1939)-C(5))-methyltransferase RlmD (450 aa).

The 59-residue stretch at 12–70 (SKQLSAKLSLNVDQLDHLGAGIAQYQGKVVFIPGALPDETVTVQLTEQKKNYARAKLIK) folds into the TRAM domain. [4Fe-4S] cluster contacts are provided by C83, C89, C92, and C171. Residues Q283, F312, N317, E333, D360, and D380 each coordinate S-adenosyl-L-methionine. The active-site Nucleophile is C406.

Belongs to the class I-like SAM-binding methyltransferase superfamily. RNA M5U methyltransferase family. RlmD subfamily.

The enzyme catalyses uridine(1939) in 23S rRNA + S-adenosyl-L-methionine = 5-methyluridine(1939) in 23S rRNA + S-adenosyl-L-homocysteine + H(+). In terms of biological role, catalyzes the formation of 5-methyl-uridine at position 1939 (m5U1939) in 23S rRNA. The protein is 23S rRNA (uracil(1939)-C(5))-methyltransferase RlmD of Shewanella putrefaciens (strain CN-32 / ATCC BAA-453).